Reading from the N-terminus, the 124-residue chain is uncharacterized protein (124 aa).

The protein belongs to the YciI family.

This is an uncharacterized protein from Rhizobium meliloti (strain 1021) (Ensifer meliloti).